The sequence spans 493 residues: Alcohol-forming fatty acyl-CoA reductase (493 aa).

This sequence belongs to the fatty acyl-CoA reductase family.

It carries out the reaction a long-chain fatty acyl-CoA + 2 NADPH + 2 H(+) = a long-chain primary fatty alcohol + 2 NADP(+) + CoA. Functionally, NADPH-dependent alcohol-forming fatty acyl-coenzyme A reductase that catalyzes the reduction of fatty acyl-CoA to fatty alcohols. The recombinant enzyme accepts saturated and mono-unsaturated fatty acyl-CoAs of 16 to 22 carbons. The protein is Alcohol-forming fatty acyl-CoA reductase of Simmondsia chinensis (Jojoba).